A 141-amino-acid polypeptide reads, in one-letter code: Hemoglobin subunit alpha (141 aa).

A Globin domain is found at 1-141 (VLSPADKSNV…VSTVLVSKYR (141 aa)). Ser3 carries the post-translational modification Phosphoserine. N6-succinyllysine occurs at positions 7 and 11. Lys16 is modified (N6-acetyllysine; alternate). Lys16 carries the N6-succinyllysine; alternate modification. Phosphotyrosine is present on Tyr24. Ser35 carries the post-translational modification Phosphoserine. Position 40 is an N6-succinyllysine (Lys40). Ser49 bears the Phosphoserine mark. His58 serves as a coordination point for O2. His87 provides a ligand contact to heme b. Ser102 carries the phosphoserine modification. Thr108 is modified (phosphothreonine). Position 124 is a phosphoserine (Ser124). Thr134 bears the Phosphothreonine mark. Phosphoserine is present on Ser138.

Belongs to the globin family. In terms of assembly, heterotetramer of two alpha chains and two beta chains. As to expression, red blood cells.

Its function is as follows. Involved in oxygen transport from the lung to the various peripheral tissues. In terms of biological role, hemopressin acts as an antagonist peptide of the cannabinoid receptor CNR1. Hemopressin-binding efficiently blocks cannabinoid receptor CNR1 and subsequent signaling. This is Hemoglobin subunit alpha (HBA) from Chalinolobus morio (Chocolate-wattled bat).